The primary structure comprises 295 residues: MKIAVYGKGGIGKSTTSCNISIALARRGKKVLQIGCDPKHDSTFTLTGFLIPTIIDTLQLKDYHYEDVWPEDVIYKGYGGVDCVEAGGPPAGAGCGGYVVGETVKLLKELNAFYEYDIILFDVLGDVVCGGFAAPLNYADYCIIITDNGFDALFAANRIAASVREKARTHPLRLAGLVGNRTSKRDLIDKYVEACPMPVLEVLPLIEDIRVSRVKGKTLFEMVESQPSLNYVCDFYLNIADQILSQPEGIVPKEVPDRELFSLLSDFYLNPVDKTKDKKENKKEDKENSADFTWL.

ATP-binding positions include 10-15 (GIGKST) and Lys39. Position 14 (Ser14) interacts with Mg(2+). Positions 95 and 129 each coordinate [4Fe-4S] cluster. 180-181 (NR) contacts ATP. The segment covering 275–289 (TKDKKENKKEDKENS) has biased composition (basic and acidic residues). The disordered stretch occupies residues 275–295 (TKDKKENKKEDKENSADFTWL).

It belongs to the NifH/BchL/ChlL family. As to quaternary structure, homodimer. Protochlorophyllide reductase is composed of three subunits; ChlL, ChlN and ChlB. It depends on [4Fe-4S] cluster as a cofactor.

It is found in the plastid. The protein localises to the chloroplast. It carries out the reaction chlorophyllide a + oxidized 2[4Fe-4S]-[ferredoxin] + 2 ADP + 2 phosphate = protochlorophyllide a + reduced 2[4Fe-4S]-[ferredoxin] + 2 ATP + 2 H2O. It participates in porphyrin-containing compound metabolism; chlorophyll biosynthesis (light-independent). In terms of biological role, component of the dark-operative protochlorophyllide reductase (DPOR) that uses Mg-ATP and reduced ferredoxin to reduce ring D of protochlorophyllide (Pchlide) to form chlorophyllide a (Chlide). This reaction is light-independent. The L component serves as a unique electron donor to the NB-component of the complex, and binds Mg-ATP. This Physcomitrium patens (Spreading-leaved earth moss) protein is Light-independent protochlorophyllide reductase iron-sulfur ATP-binding protein.